We begin with the raw amino-acid sequence, 1735 residues long: MNFLSTAESRTAQAAASGTTLLPQFRAPSWQTGMHSSAATELFATGPLPSTGTLPPSLSAYQHPTTFSNRNFATTSPLVLQDSTFNTTSNGILSHHDPLLQIKTSQGTVPTALAFERLGSSVLSNSIPPQSSTYRSAQESAPHLLQPQFSLLPSALGGSQQTPQAYSSTLFTSSTASIERALLRECSVIKHHQRPSGTQSIQAQLTGSQHSLHSYLSNSSVVNFQETTRQSSLSCSPIGDSTQVSNGGLQQKTSQVSVELAQSYSSAIPSSGYPPSTTKIKSCSTEQPLTSTKTPKPQSIIPPVQTLSYSKPLHNQSSVISGQAQIYSTAQLPSLLSVSQSQNYGLVQPHNVPSIVHSQVYRSSKVEKLPPLYKTLTFSGSSQTVTPENQTLNYSSNQQEVLSSVTNENYPAQTRDLSSVSQSQSYSSGHSQGLSPVSQTQVSYSSQSQVLSVVSLSESYASGESLTLTAPSLSYSSASRAQNLPDSSPTQNYISMHSSQNVQTQESSSPQSQKFLPAVQSSSFASSTHCQTLQNNITSPDPKSYAERKLDSDVYPSSKQEDGFPMQELQVLQPQASLESSTQRLSDGEINAQESTYKVSKADDRYSQSVIRSNSRLEDQVIGVALQASKKEESVVGSVTQLNQQIGQVNNAATLDLKNSTNLIQTPQIRLNTKDLKQQHPLILKVHESKVQEQHDQIINASSQIQIPNHALGHGHQASLPNTQVLLDSACDLQILQQSILQAGLGQVKASLQAQRVQSPQQIVHPFLQMEGHVIQSNGDHSQQQLHPQNSEVMKMDLSESSKPLQQHLTTKGHFSETNQHDSKNQFVSLGSMCFPEAVLLSDERNILSNVDDILAATAAACGVTPTDFSKSTSNETMQAVEDGDSKSHFQQSLDVRHVTSDFNSMTATVGKPQNINDTSLNGNQVTVNLSPVPALQSKMTLDQQHIETPGQNIPTKVTSAVVGPSHEVQEQSSGPFKKQSATNLESEEDSEAPVDSTLNNNRNQEFVSSSRSISGENATSESEFTLGGDDSGVSMNPARSALALLAMAQSGDAVSVKIEEENQDLMHFNLQKKRAKGKGQVKEEDNSNQKQLKRPAQGKRQNPRGTDIYLPYTPPSSESCHDGYQHQEKMRQKIKEVEEKQPEVKTGFIASFLDFLKSGPKQQFSTLAVRMPNRTRRPGTQMVRTFCPPPLPKPSSTTPTPLVSETGGNSPSDKVDNELKNLEHLSSFSSDEDDPGYSQDAYKSVSTPLTTLDATSDKKKKTEALQVATTSPTANTTGTATTSSTTVGAVKQEPLHSTSYAVNILENISSSESSKPIELDGLPSDQFAKGQDTVAIEGFTDEEDTESGGEGQYRERDEFVVKIEDIETFKEALKTGKEPPAIWKVQKALLQKFVPEIRDGQREFAATNSYLGYFGDAKSKYKRIYVKFIENANKKEYVRVCSKKPRNKPSQTIRTVQAKPSSSSKTSDPLASKTTTTKAPSVKPKVKQPKVKAEPPPKKRKKWKEEFSSSQSDSSPEIHTSSSDDEEFEPPAPFVTRFLNTRAMKETFKSYMELLVSIALDPDTMQALEKSNDELLLPHMKKIDGMLNDNRKRLLLNLHLDQSFKNALESFPELTIITRDSKAKSGGTAISKIKMNGKAYNKKTLRTSKTTTKSAQEFAVDPEKIQLYSLYHSLHHYKYHVYLICKDEISSVQKKNEDLGQEEIVQLCMKNVKWVEDLFEKFGELLNHVQQKCS.

Met-1 is modified (N-acetylmethionine). Residues 267-297 are compositionally biased toward polar residues; sequence AIPSSGYPPSTTKIKSCSTEQPLTSTKTPKP. Disordered stretches follow at residues 267-301, 414-440, 479-518, and 533-561; these read AIPS…QSII, TRDL…VSQT, SRAQ…FLPA, and LQNN…SKQE. The span at 417-440 shows a compositional bias: low complexity; sequence LSSVSQSQSYSSGHSQGLSPVSQT. Residues Ser-586, Ser-615, and Ser-886 each carry the phosphoserine modification. Residue Thr-949 is modified to Phosphothreonine. Positions 964 to 1033 are disordered; that stretch reads GPSHEVQEQS…EFTLGGDDSG (70 aa). Over residues 971 to 985 the composition is skewed to polar residues; the sequence is EQSSGPFKKQSATNL. Ser-987 is subject to Phosphoserine. A compositionally biased stretch (polar residues) spans 997 to 1024; it reads STLNNNRNQEFVSSSRSISGENATSESE. Glycyl lysine isopeptide (Lys-Gly) (interchain with G-Cter in SUMO2) cross-links involve residues Lys-1058 and Lys-1083. Disordered regions lie at residues 1073-1132 and 1178-1217; these read KKRA…EKMR and RPGT…DKVD. Basic and acidic residues predominate over residues 1120–1132; the sequence is SCHDGYQHQEKMR. Residues Ser-1211, Ser-1230, Ser-1231, and Ser-1239 each carry the phosphoserine modification. The tract at residues 1256-1286 is disordered; it reads TSDKKKKTEALQVATTSPTANTTGTATTSST. Positions 1269 to 1286 are enriched in low complexity; that stretch reads ATTSPTANTTGTATTSST. Thr-1341 carries the post-translational modification Phosphothreonine. A Phosphoserine modification is found at Ser-1348. A disordered region spans residues 1441-1532; the sequence is VCSKKPRNKP…SSDDEEFEPP (92 aa). Over residues 1449 to 1478 the composition is skewed to polar residues; it reads KPSQTIRTVQAKPSSSSKTSDPLASKTTTT. Over residues 1492-1508 the composition is skewed to basic and acidic residues; it reads VKAEPPPKKRKKWKEEF.

Interacts with TET1.

It is found in the chromosome. Functionally, plays an essential role in the protection and maintenance of transcriptional and developmental programs. Protects many bivalent promoters and poised enhancers from hypermethylation, showing a marked preference for these regulatory elements over other types of promoters or enhancers. Mechanistically, cooperates with TET1 and binds to DNA in a common complex to inhibit the binding of DNMT3A/3B and therefore de novo methylation. This Homo sapiens (Human) protein is Glutamine and serine-rich protein 1 (QSER1).